We begin with the raw amino-acid sequence, 290 residues long: Glycine--tRNA ligase alpha subunit (290 aa).

It belongs to the class-II aminoacyl-tRNA synthetase family. Tetramer of two alpha and two beta subunits.

The protein resides in the cytoplasm. It catalyses the reaction tRNA(Gly) + glycine + ATP = glycyl-tRNA(Gly) + AMP + diphosphate. The sequence is that of Glycine--tRNA ligase alpha subunit from Nitratiruptor sp. (strain SB155-2).